Here is a 172-residue protein sequence, read N- to C-terminus: uncharacterized protein (172 aa).

This is an uncharacterized protein from Homo sapiens (Human).